A 160-amino-acid chain; its full sequence is Large ribosomal subunit protein uL10 (160 aa).

Belongs to the universal ribosomal protein uL10 family. In terms of assembly, part of the ribosomal stalk of the 50S ribosomal subunit. The N-terminus interacts with L11 and the large rRNA to form the base of the stalk. The C-terminus forms an elongated spine to which L12 dimers bind in a sequential fashion forming a multimeric L10(L12)X complex.

Its function is as follows. Forms part of the ribosomal stalk, playing a central role in the interaction of the ribosome with GTP-bound translation factors. In Ehrlichia canis (strain Jake), this protein is Large ribosomal subunit protein uL10.